The chain runs to 265 residues: Hemin import ATP-binding protein HmuV (265 aa).

Positions 13-249 constitute an ABC transporter domain; the sequence is LKASNLHLQL…TAVENVYGWP (237 aa). Position 45 to 52 (45 to 52) interacts with ATP; it reads GPNGAGKS.

Belongs to the ABC transporter superfamily. Heme (hemin) importer (TC 3.A.1.14.5) family. As to quaternary structure, the complex is composed of two ATP-binding proteins (HmuV), two transmembrane proteins (HmuU) and a solute-binding protein (HmuT).

The protein localises to the cell inner membrane. In terms of biological role, part of the ABC transporter complex HmuTUV involved in hemin import. Responsible for energy coupling to the transport system. The chain is Hemin import ATP-binding protein HmuV from Photobacterium damselae subsp. damselae (Listonella damsela).